The sequence spans 390 residues: Transposase for insertion sequence element IS21 (390 aa).

The HTH IS21-type domain maps to 5 to 66 (EDFYMIKQMR…PFMDYIDMRL (62 aa)). Residues 20–39 (IVDIATQIGCSERTVRRYLK) constitute a DNA-binding region (H-T-H motif). One can recognise an Integrase catalytic domain in the interval 111-285 (FETQPRYQLQ…TPEQRFALEQ (175 aa)).

This sequence belongs to the transposase IS21/IS408/IS1162 family.

Involved in the transposition of the insertion sequence. This is Transposase for insertion sequence element IS21 (istA) from Pseudomonas aeruginosa.